The sequence spans 226 residues: Transmembrane 4 L6 family member 20 (226 aa).

Residues 1–14 (MTCCEGWTSCNGFS) lie on the Lumenal side of the membrane. The helical transmembrane segment at 15-35 (LLILILLGVVINCIPLGISLV) threads the bilayer. At 36–49 (EADSTSQNPISCYE) the chain is on the cytoplasmic side. Residues 50 to 70 (WWFPGIIGAGLMAIPATTMSL) traverse the membrane as a helical segment. Residues 71–83 (AARKRACCNNKTG) lie on the Lumenal side of the membrane. Residues 84–104 (MFLSSLFSVITVVGAVYCMLV) form a helical membrane-spanning segment. Over 105-191 (SLQALLEGPL…RIFHFSVFMS (87 aa)) the chain is Cytoplasmic. The chain crosses the membrane as a helical span at residues 192-212 (LLLVGILELLFGLSQILIGFL). Residues 213 to 226 (GCLCGVSQRRSQIV) lie on the Lumenal side of the membrane.

This sequence belongs to the L6 tetraspanin family. In terms of processing, glycosylated at Asn-132, Asn-148 and Asn-163 in presence of ceramide which inverts the orientation of TM4SF20 in membranes exposing these residues to the endoplasmic reticulum lumen. Cleaved by signal peptidase at Ser-14 but the peptide does not act as a signal peptide. Cleavage is inhibited by ceramide which inverts the orientation of TM4SF20 in membranes exposing the N-terminus to the cytosol and not to the endoplasmic reticulum lumen.

The protein localises to the membrane. The protein resides in the endoplasmic reticulum membrane. In terms of biological role, polytopic transmembrane protein. Inhibits regulated intramembrane proteolysis (RIP) of CREB3L1, inhibiting its activation and the induction of collagen synthesis. In response to ceramide, which alters TM4SF20 membrane topology, stimulates RIP activation of CREB3L1. Ceramide reverses the direction through which transmembrane helices are translocated into the endoplasmic reticulum membrane during translation of TM4SF20, this mechanism is called 'regulated alternative translocation' (RAT) and regulates the function of the transmembrane protein. This Mus musculus (Mouse) protein is Transmembrane 4 L6 family member 20 (Tm4sf20).